The primary structure comprises 252 residues: Maintenance of carboxysome distribution protein A (252 aa).

Positions 11, 12, 14, 15, 16, 17, 41, 147, 151, 182, 183, 216, 217, and 218 each coordinate ATP. Residue Thr-16 participates in Mg(2+) binding.

This sequence belongs to the ParA family. McdA subfamily. As to quaternary structure, self-associates (probably a homodimer), interacts with McdB probably via the C-terminus of both proteins. Shows no signs of filament formation. Homodimerizes in the presence of ATP, making extra nucleotide contacts than with ADP or AMP-PNP. Each subunit binds 1 ATP molecule; Glu-147, Lys-151 and Arg-183 cross the dimer interface to contact ATP in the other subunit, while Phe-182, Arg-183 and Phe-221 stack with the adenine base in their own subunit.

Its subcellular location is the cytoplasm. The protein localises to the nucleoid. The catalysed reaction is ATP + H2O = ADP + phosphate + H(+). McdA and McdB together mediate carboxysome (Cb) spacing, size, ultrastructure and probably inheritance in the cell. Together they prevent Cb aggregation. McdA is an ATPase that forms dynamic gradients on the nucleoid in response to adapter protein McdB, which associates with carboxysomes. The interplay between McdA gradients on the nucleoid and McdB-bound carboxysomes result in the equal spacing of Cbs along the cell length. Binds nucleoid DNA in an ATP-dependent manner; neither ADP nor ATP-gamma-S support DNA binding. Upon ATP-binding dimerizes and binds nucleoid DNA; the (McdA-ATP)2 dimer transiently binds McdB-bound Cbs. McdA's ATPase activity is stimulated 2-fold by DNA and McdB; ATP hydrolysis causes McdA release from DNA. Overexpression leads to loss of McdA oscillation, diffuse nucleoid staining by McdA with formation of large carboxysome aggregates that are in regions depleted of McdA; McdA remains nucleoid-associated. Functionally, mutagenesis studies (characterized in vivo) suggest ATP binding, protein dimerization and a conformational change are necessary for nucleoid DNA-binding and binding to McdB-bound Cbs, which tethers Cbs to the nucleoid. Eventual McdB-stimulated ATP hydrolysis causes de-dimerization of McdA which no longer binds the nucleoid and releases McdB and Cbs. McdB-bound Cbs then move to a region of higher McdA concentration, distributing Cbs across the nucleoid. Its function is as follows. Incorrect positioning (aggregation) of carboxysomes results in reduced CO(2) fixation by encapsulated ribulose-1,5-bisphosphate carboxylase (RuBisCO, cbbL/cbbS), which leads to slower growth, cell elongation, asymmetric cell division and an increase in RuBisCO levels. This is Maintenance of carboxysome distribution protein A from Synechococcus elongatus (strain ATCC 33912 / PCC 7942 / FACHB-805) (Anacystis nidulans R2).